The chain runs to 154 residues: 6,7-dimethyl-8-ribityllumazine synthase (154 aa).

Residues F23, 57–59, and 81–83 contribute to the 5-amino-6-(D-ribitylamino)uracil site; these read AFE and AVI. 86–87 provides a ligand contact to (2S)-2-hydroxy-3-oxobutyl phosphate; sequence AT. H89 serves as the catalytic Proton donor. F114 provides a ligand contact to 5-amino-6-(D-ribitylamino)uracil. R128 lines the (2S)-2-hydroxy-3-oxobutyl phosphate pocket.

Belongs to the DMRL synthase family.

It carries out the reaction (2S)-2-hydroxy-3-oxobutyl phosphate + 5-amino-6-(D-ribitylamino)uracil = 6,7-dimethyl-8-(1-D-ribityl)lumazine + phosphate + 2 H2O + H(+). The protein operates within cofactor biosynthesis; riboflavin biosynthesis; riboflavin from 2-hydroxy-3-oxobutyl phosphate and 5-amino-6-(D-ribitylamino)uracil: step 1/2. Its function is as follows. Catalyzes the formation of 6,7-dimethyl-8-ribityllumazine by condensation of 5-amino-6-(D-ribitylamino)uracil with 3,4-dihydroxy-2-butanone 4-phosphate. This is the penultimate step in the biosynthesis of riboflavin. This Syntrophus aciditrophicus (strain SB) protein is 6,7-dimethyl-8-ribityllumazine synthase.